The primary structure comprises 456 residues: Bifunctional protein GlmU (456 aa).

The pyrophosphorylase stretch occupies residues 1-229; sequence MLNSAMSVVI…ISETDGVNNR (229 aa). Residues 11-14, Lys25, Gln76, 81-82, 103-105, Gly140, Glu154, Asn169, and Asn227 each bind UDP-N-acetyl-alpha-D-glucosamine; these read LAAG, GT, and YGD. Asp105 serves as a coordination point for Mg(2+). Asn227 provides a ligand contact to Mg(2+). The tract at residues 230–250 is linker; it reads LQLSRLERIYQAEQAEKLLLS. The interval 251-456 is N-acetyltransferase; the sequence is GVMLRDPARF…QGWQRPVKKK (206 aa). UDP-N-acetyl-alpha-D-glucosamine is bound by residues Arg333 and Lys351. His363 functions as the Proton acceptor in the catalytic mechanism. Positions 366 and 377 each coordinate UDP-N-acetyl-alpha-D-glucosamine. Acetyl-CoA is bound by residues Ala380, 386-387, Ser405, Ala423, and Arg440; that span reads NY.

In the N-terminal section; belongs to the N-acetylglucosamine-1-phosphate uridyltransferase family. This sequence in the C-terminal section; belongs to the transferase hexapeptide repeat family. Homotrimer. Mg(2+) is required as a cofactor.

The protein resides in the cytoplasm. The catalysed reaction is alpha-D-glucosamine 1-phosphate + acetyl-CoA = N-acetyl-alpha-D-glucosamine 1-phosphate + CoA + H(+). It carries out the reaction N-acetyl-alpha-D-glucosamine 1-phosphate + UTP + H(+) = UDP-N-acetyl-alpha-D-glucosamine + diphosphate. The protein operates within nucleotide-sugar biosynthesis; UDP-N-acetyl-alpha-D-glucosamine biosynthesis; N-acetyl-alpha-D-glucosamine 1-phosphate from alpha-D-glucosamine 6-phosphate (route II): step 2/2. It functions in the pathway nucleotide-sugar biosynthesis; UDP-N-acetyl-alpha-D-glucosamine biosynthesis; UDP-N-acetyl-alpha-D-glucosamine from N-acetyl-alpha-D-glucosamine 1-phosphate: step 1/1. Its pathway is bacterial outer membrane biogenesis; LPS lipid A biosynthesis. Catalyzes the last two sequential reactions in the de novo biosynthetic pathway for UDP-N-acetylglucosamine (UDP-GlcNAc). The C-terminal domain catalyzes the transfer of acetyl group from acetyl coenzyme A to glucosamine-1-phosphate (GlcN-1-P) to produce N-acetylglucosamine-1-phosphate (GlcNAc-1-P), which is converted into UDP-GlcNAc by the transfer of uridine 5-monophosphate (from uridine 5-triphosphate), a reaction catalyzed by the N-terminal domain. This is Bifunctional protein GlmU from Salmonella agona (strain SL483).